Consider the following 552-residue polypeptide: Cleavage and polyadenylation specificity factor subunit 6 (552 aa).

Positions 1 to 213 (MADGVDHIDI…RGRFPGAVPG (213 aa)) are necessary for interaction with NXF1. One can recognise an RRM domain in the interval 81–161 (IALYIGNLTR…QNPVVTPCNK (81 aa)). Residues 81-161 (IALYIGNLTR…QNPVVTPCNK (81 aa)) are necessary for interaction with NUDT21/CPSF5. The interval 81–161 (IALYIGNLTR…QNPVVTPCNK (81 aa)) is necessary for nuclear paraspeckles localization. Thr-157 carries the post-translational modification Phosphothreonine. The segment covering 169–180 (MQSRKTTQSGQM) has biased composition (polar residues). 2 disordered regions span residues 169 to 411 (MQSR…PLSE) and 479 to 552 (GIES…YRHR). The short motif at 202–206 (RGRGR) is the GAR element. The span at 207-219 (FPGAVPGGDRFPG) shows a compositional bias: low complexity. Pro residues-rich tracts occupy residues 220-265 (PTGP…PLAG), 285-366 (GQPP…PPPT), and 377-388 (GPPPTDPYGRPP). Residues 389 to 404 (PYDRGDYGPPGREMDT) show a composition bias toward basic and acidic residues. 2 positions are modified to phosphothreonine: Thr-404 and Thr-407. The interval 404–552 (TARTPLSEAE…RDREREYRHR (149 aa)) is sufficient for nuclear speckle localization. A necessary for RNA-binding region spans residues 405 to 552 (ARTPLSEAEF…RDREREYRHR (148 aa)). Residues 481 to 552 (ESKSYGSGSR…RDREREYRHR (72 aa)) are necessary for interaction with SRSF3, SRSF7 and TRA2B/SFRS10. Positions 491-552 (RRERSRERDH…RDREREYRHR (62 aa)) are arg/Ser-rich domain. Residues 494-504 (RSRERDHSRSR) show a composition bias toward basic and acidic residues. Phosphoserine is present on residues Ser-495, Ser-501, Ser-512, Ser-514, and Ser-526. Residues 505 to 515 (EKSRRHKSRSR) show a composition bias toward basic residues. The segment at 511–552 (KSRSRDRHDDYYRERSRERERHRDRDRDRDRERDREREYRHR) is sufficient for nuclear targeting. Positions 516-552 (DRHDDYYRERSRERERHRDRDRDRDRERDREREYRHR) are enriched in basic and acidic residues.

It belongs to the RRM CPSF6/7 family. In terms of assembly, component of the cleavage factor Im (CFIm) complex which is a heterotetramer composed of two subunits of NUDT21/CPSF5 and two subunits of CPSF6 or CPSF7 or a heterodimer of CPSF6 and CPSF7. The cleavage factor Im (CFIm) complex associates with the CPSF and CSTF complexes to promote the assembly of the core mRNA 3'-processing machinery. Associates with the exon junction complex (EJC). Associates with the 80S ribosome particle. Interacts (via the RRM domain) with NUDT21/CPSF5; this interaction is direct and enhances binding to RNA. Interacts (via Arg/Ser-rich domain) with FIP1L1 (preferentially via unphosphorylated form and Arg/Glu/Asp-rich domain); this interaction mediates, at least in part, the interaction between the CFIm and CPSF complexes and may be inhibited by CPSF6 hyper-phosphorylation. Interacts (via N-terminus) with NXF1; this interaction is direct. Interacts with SRSF3. Interacts with SRSF7. Interacts with SNRNP70. Interacts with TRA2B/SFRS10. Interacts with UPF1. Interacts with UPF3B. Interacts with VIRMA. Interacts (via Arg/Ser-rich domain) with TNPO3; promoting nuclear import of CPSF6 independently of its phosphorylation status. Interacts with YTHDC1. Post-translationally, phosphorylated. Phosphorylated in the Arg/Ser-rich domain by SRPK1, in vitro. Symmetrically dimethylated on arginine residues in the GAR motif by PRMT5 in a WDR77- and CLNS1A-dependent manner. Asymmetrically dimethylated on arginine residues in the GAR motif by PRMT1.

It is found in the nucleus. Its subcellular location is the nucleoplasm. The protein resides in the nucleus speckle. It localises to the cytoplasm. Its function is as follows. Component of the cleavage factor Im (CFIm) complex that functions as an activator of the pre-mRNA 3'-end cleavage and polyadenylation processing required for the maturation of pre-mRNA into functional mRNAs. CFIm contributes to the recruitment of multiprotein complexes on specific sequences on the pre-mRNA 3'-end, so called cleavage and polyadenylation signals (pA signals). Most pre-mRNAs contain multiple pA signals, resulting in alternative cleavage and polyadenylation (APA) producing mRNAs with variable 3'-end formation. The CFIm complex acts as a key regulator of cleavage and polyadenylation site choice during APA through its binding to 5'-UGUA-3' elements localized in the 3'-untranslated region (UTR) for a huge number of pre-mRNAs. CPSF6 enhances NUDT21/CPSF5 binding to 5'-UGUA-3' elements localized upstream of pA signals and promotes RNA looping, and hence activates directly the mRNA 3'-processing machinery. Plays a role in mRNA export. This chain is Cleavage and polyadenylation specificity factor subunit 6, found in Pongo abelii (Sumatran orangutan).